Here is a 342-residue protein sequence, read N- to C-terminus: S-adenosylmethionine:tRNA ribosyltransferase-isomerase (342 aa).

Belongs to the QueA family. Monomer.

Its subcellular location is the cytoplasm. It carries out the reaction 7-aminomethyl-7-carbaguanosine(34) in tRNA + S-adenosyl-L-methionine = epoxyqueuosine(34) in tRNA + adenine + L-methionine + 2 H(+). It participates in tRNA modification; tRNA-queuosine biosynthesis. Its function is as follows. Transfers and isomerizes the ribose moiety from AdoMet to the 7-aminomethyl group of 7-deazaguanine (preQ1-tRNA) to give epoxyqueuosine (oQ-tRNA). The protein is S-adenosylmethionine:tRNA ribosyltransferase-isomerase of Bacillus subtilis (strain 168).